The chain runs to 294 residues: 2-oxoglutaramate amidase (294 aa).

A CN hydrolase domain is found at Leu-16 to Phe-261. The active-site Proton acceptor is the Glu-55. Catalysis depends on Lys-129, which acts as the Proton donor. The active-site Nucleophile is Cys-168.

It belongs to the carbon-nitrogen hydrolase superfamily. NIT1/NIT2 family.

It carries out the reaction 2-oxoglutaramate + H2O = 2-oxoglutarate + NH4(+). The protein operates within alkaloid degradation; nicotine degradation. Catalyzes the conversion of 2-oxoglutaramate to 2-oxoglutarate. Together with glutamate dehydrogenase, may form a physiologically relevant enzyme couple, leading to transformation of metabolically inert 2-oxoglutaramate derived from trihydroxypyridine into glutamate, a central compound of nitrogen metabolism. The sequence is that of 2-oxoglutaramate amidase from Paenarthrobacter nicotinovorans (Arthrobacter nicotinovorans).